A 375-amino-acid polypeptide reads, in one-letter code: MAGNKKQVKKNTKPIVVDIDDKPLLDTSNLDTAVQTSASTKKDGKKVTATTTTTTPTPTPTPTPTPTTTTTTEKKSKEIEIVPTPSNVPASISASTSNVVIAPAVEAQITDDFSVVPEKNKNKKKINSTATDGTTTTTNIPKPTPVRAPITKKGNTAPRSQFHLLALDEDDITFDETHSHKEEPKQPQQQHSTKKSSSKQQATQNVSSSSSSKKSKSKETKKVEPTPTTTTQRTTTTKSTPTPTPTPTPAATKVVEQPKEKSSPAPVKKEKEIKQNKKESEGFLFSLMESLITPGVPSVVYKIIYVALIGVLLFSLVPLYYSGLDSIYSYGVIALVLGLGISLTLFISEIPRLQASKEQKSKSGNKKSTTRKVKA.

Basic residues predominate over residues 1–12 (MAGNKKQVKKNT). Disordered stretches follow at residues 1–76 (MAGN…EKKS) and 119–274 (KNKN…KEIK). The span at 26 to 39 (DTSNLDTAVQTSAS) shows a compositional bias: polar residues. A compositionally biased stretch (low complexity) spans 129 to 141 (TATDGTTTTTNIP). Positions 175 to 185 (DETHSHKEEPK) are enriched in basic and acidic residues. Low complexity-rich tracts occupy residues 198–212 (SKQQ…SSSS) and 225–241 (PTPT…KSTP). Residues 256–274 (EQPKEKSSPAPVKKEKEIK) are compositionally biased toward basic and acidic residues. Helical transmembrane passes span 299 to 319 (VVYK…LVPL) and 327 to 347 (IYSY…TLFI). The disordered stretch occupies residues 355–375 (ASKEQKSKSGNKKSTTRKVKA). A compositionally biased stretch (basic residues) spans 363–375 (SGNKKSTTRKVKA).

It localises to the membrane. This is an uncharacterized protein from Dictyostelium discoideum (Social amoeba).